The sequence spans 122 residues: Small ribosomal subunit protein uS13 (122 aa).

The disordered stretch occupies residues 97 to 122 (PVRGQRTHTNARTRKGPAKAIAGKKK).

The protein belongs to the universal ribosomal protein uS13 family. As to quaternary structure, part of the 30S ribosomal subunit. Forms a loose heterodimer with protein S19. Forms two bridges to the 50S subunit in the 70S ribosome.

Functionally, located at the top of the head of the 30S subunit, it contacts several helices of the 16S rRNA. In the 70S ribosome it contacts the 23S rRNA (bridge B1a) and protein L5 of the 50S subunit (bridge B1b), connecting the 2 subunits; these bridges are implicated in subunit movement. Contacts the tRNAs in the A and P-sites. This chain is Small ribosomal subunit protein uS13, found in Brucella anthropi (strain ATCC 49188 / DSM 6882 / CCUG 24695 / JCM 21032 / LMG 3331 / NBRC 15819 / NCTC 12168 / Alc 37) (Ochrobactrum anthropi).